The primary structure comprises 92 residues: Small ribosomal subunit protein uS15 (92 aa).

This sequence belongs to the universal ribosomal protein uS15 family. In terms of assembly, part of the 30S ribosomal subunit. Forms a bridge to the 50S subunit in the 70S ribosome, contacting the 23S rRNA.

Functionally, one of the primary rRNA binding proteins, it binds directly to 16S rRNA where it helps nucleate assembly of the platform of the 30S subunit by binding and bridging several RNA helices of the 16S rRNA. In terms of biological role, forms an intersubunit bridge (bridge B4) with the 23S rRNA of the 50S subunit in the ribosome. The chain is Small ribosomal subunit protein uS15 from Symbiobacterium thermophilum (strain DSM 24528 / JCM 14929 / IAM 14863 / T).